The following is a 480-amino-acid chain: MNANWNFDNSYARLPERFFTRIYPTPVSDPKLVVLNHSLAKELGLNAEVLASEEGVAVFAGNRVPEGAEPLAQAYAGHQFGYFNMLGDGRAILLGEHVTPSGERVDIQLKGSGRTPYSRGGDGRAALGPMLREYIISEAMHALGIPTTRSLAVVTTGEVVMRETELPGAILTRVAASHLRVGTFQYAGRFLSKEELQALADYAIKRHYPNGEHASNRYVFLLEEVMKKQAALVAKWQLVGFIHGVMNTDNMTISGETIDYGPCAFMDVYDPETVFSSIDTQGRYAYGNQPYIAGWNIARFAESLLPLLHDEEEKAIEIAQKVIEQFPALYETYWLQGMRAKLGLWTEEAEDKKLIGELLHLMYTHRLDYTNTFRSLTLEEWHFCEQELRDWYTRWQQRIARQDMTKEEVYECMRQNNPAIIPRNYRVEEALAAAVEHGDDTVMERLLHVLSDPYAYMEEQEEYAKTPEPSDRPYRTFCGT.

The ATP site is built by Gly-87, Gly-89, Arg-90, Lys-110, Asp-122, Gly-123, Arg-173, and Arg-180. Asp-249 functions as the Proton acceptor in the catalytic mechanism. Mg(2+) contacts are provided by Asn-250 and Asp-259. Asp-259 is an ATP binding site.

Belongs to the SELO family. Mg(2+) serves as cofactor. Mn(2+) is required as a cofactor.

The catalysed reaction is L-seryl-[protein] + ATP = 3-O-(5'-adenylyl)-L-seryl-[protein] + diphosphate. It carries out the reaction L-threonyl-[protein] + ATP = 3-O-(5'-adenylyl)-L-threonyl-[protein] + diphosphate. It catalyses the reaction L-tyrosyl-[protein] + ATP = O-(5'-adenylyl)-L-tyrosyl-[protein] + diphosphate. The enzyme catalyses L-histidyl-[protein] + UTP = N(tele)-(5'-uridylyl)-L-histidyl-[protein] + diphosphate. The catalysed reaction is L-seryl-[protein] + UTP = O-(5'-uridylyl)-L-seryl-[protein] + diphosphate. It carries out the reaction L-tyrosyl-[protein] + UTP = O-(5'-uridylyl)-L-tyrosyl-[protein] + diphosphate. Functionally, nucleotidyltransferase involved in the post-translational modification of proteins. It can catalyze the addition of adenosine monophosphate (AMP) or uridine monophosphate (UMP) to a protein, resulting in modifications known as AMPylation and UMPylation. This Anoxybacillus flavithermus (strain DSM 21510 / WK1) protein is Protein nucleotidyltransferase YdiU.